Consider the following 392-residue polypeptide: Protein SRL2 (392 aa).

Position 11 is a phosphoserine (Ser11). The tract at residues 18–52 (KPSETPKMEEEKLEVTNVNASSSKKVHKSKKSTSK) is disordered. The segment covering 21-31 (ETPKMEEEKLE) has biased composition (basic and acidic residues). Residues 41-50 (KKVHKSKKST) show a composition bias toward basic residues. Ser139 bears the Phosphoserine mark. The interval 284–303 (EDSTAVTNENGHISSEKNLK) is disordered. The segment covering 287–296 (TAVTNENGHI) has biased composition (polar residues).

It localises to the cytoplasm. It is found in the nucleus. This Saccharomyces cerevisiae (strain ATCC 204508 / S288c) (Baker's yeast) protein is Protein SRL2 (SRL2).